We begin with the raw amino-acid sequence, 276 residues long: Ribosomal RNA small subunit methyltransferase A (276 aa).

Residues asparagine 27, leucine 29, glycine 54, glutamate 75, aspartate 101, and asparagine 122 each coordinate S-adenosyl-L-methionine.

Belongs to the class I-like SAM-binding methyltransferase superfamily. rRNA adenine N(6)-methyltransferase family. RsmA subfamily.

It is found in the cytoplasm. It carries out the reaction adenosine(1518)/adenosine(1519) in 16S rRNA + 4 S-adenosyl-L-methionine = N(6)-dimethyladenosine(1518)/N(6)-dimethyladenosine(1519) in 16S rRNA + 4 S-adenosyl-L-homocysteine + 4 H(+). Specifically dimethylates two adjacent adenosines (A1518 and A1519) in the loop of a conserved hairpin near the 3'-end of 16S rRNA in the 30S particle. May play a critical role in biogenesis of 30S subunits. The protein is Ribosomal RNA small subunit methyltransferase A of Brucella abortus (strain S19).